Consider the following 723-residue polypeptide: Bifunctional lysine-specific demethylase and histidyl-hydroxylase NO66 (723 aa).

Disordered stretches follow at residues 13-34 (KKTA…QKAA) and 48-213 (SAVK…APSC). Basic residues predominate over residues 14-31 (KTAKKPAKKTTKQNRQKQ). Residues 49–72 (AVKQNNGAKGKAKANGVKGNAKAQ) are compositionally biased toward low complexity. Acidic residues-rich tracts occupy residues 88 to 106 (ESVD…EDNE) and 114 to 129 (EDDY…EFEE). A compositionally biased stretch (low complexity) spans 133-155 (NSPSGSCSCSASSGSSNTENSPP). The segment covering 190–199 (EQKEGKELSK) has biased composition (basic and acidic residues). Low complexity predominate over residues 204–213 (KSAPAAAPSC). The JmjC domain occupies 379–518 (NPSTYLKGLR…NLMEALMPAV (140 aa)). Fe cation is bound by residues histidine 419, aspartate 421, and histidine 484.

Belongs to the ROX family. NO66 subfamily. It depends on Fe(2+) as a cofactor.

It localises to the nucleus. It catalyses the reaction N(6),N(6)-dimethyl-L-lysyl(36)-[histone H3] + 2 2-oxoglutarate + 2 O2 = L-lysyl(36)-[histone H3] + 2 formaldehyde + 2 succinate + 2 CO2. Its function is as follows. Oxygenase that can act as both a histone lysine demethylase and a ribosomal histidine hydroxylase. Specifically demethylates 'Lys-4' (H3K4me) and 'Lys-36' (H3K36me) of histone H3, thereby playing a central role in histone code. This Drosophila grimshawi (Hawaiian fruit fly) protein is Bifunctional lysine-specific demethylase and histidyl-hydroxylase NO66.